An 88-amino-acid chain; its full sequence is Small ribosomal subunit protein bS20 (88 aa).

Disordered regions lie at residues 1–29 (MANT…SKLR) and 69–88 (KNTA…AMAA).

Belongs to the bacterial ribosomal protein bS20 family.

In terms of biological role, binds directly to 16S ribosomal RNA. The chain is Small ribosomal subunit protein bS20 from Polynucleobacter asymbioticus (strain DSM 18221 / CIP 109841 / QLW-P1DMWA-1) (Polynucleobacter necessarius subsp. asymbioticus).